The sequence spans 433 residues: Chaperone SurA (433 aa).

Residues 1 to 24 form the signal peptide; it reads MKYRIKALLLASSLIITTITSVQA. 2 consecutive PpiC domains span residues 175–276 and 285–384; these read NVEY…KVLD and VEEV…KLED.

The protein resides in the periplasm. It catalyses the reaction [protein]-peptidylproline (omega=180) = [protein]-peptidylproline (omega=0). Chaperone involved in the correct folding and assembly of outer membrane proteins. Recognizes specific patterns of aromatic residues and the orientation of their side chains, which are found more frequently in integral outer membrane proteins. May act in both early periplasmic and late outer membrane-associated steps of protein maturation. The protein is Chaperone SurA of Colwellia psychrerythraea (strain 34H / ATCC BAA-681) (Vibrio psychroerythus).